Here is a 1573-residue protein sequence, read N- to C-terminus: Synaptojanin-1 (1573 aa).

The SAC domain occupies 119-442 (VRKVLNSGNF…GDSISKIYAG (324 aa)). A catalytic region spans residues 500–899 (GSLRVSEQTL…GPPDGTVLVS (400 aa)). Phosphoserine is present on residues S820 and S830. The 70-residue stretch at 902–971 (SSLPENNFFD…RTITIALKSP (70 aa)) folds into the RRM domain. The span at 1029-1054 (HLQPSSSSGLGTSPSSSPRTSPCQSP) shows a compositional bias: low complexity. 4 disordered regions span residues 1029–1322 (HLQP…PLKI), 1341–1360 (SVQTSPVPTPDPKRLIQLPS), 1370–1463 (VSCM…GFKD), and 1535–1573 (SRRPPPPPVPLLPPGTSPPVDPFTTLASKASPTLDFTER). S1053 is modified (phosphoserine). Residues 1108-1130 (PPPPRPVAPPTRPAPPQRPPPPS) are compositionally biased toward pro residues. 2 positions are modified to phosphoserine: S1150 and S1178. At R1201 the chain carries Omega-N-methylarginine. T1220 carries the phosphothreonine modification. Residues 1221-1234 (PESQSKTSETSKGS) are compositionally biased toward polar residues. Phosphoserine is present on S1292. Residues 1293 to 1304 (SHSLPSEASSQP) show a composition bias toward low complexity. Over residues 1313-1322 (DGKRESPLKI) the composition is skewed to basic and acidic residues. 2 positions are modified to phosphoserine: S1318 and S1345. T1349 carries the phosphothreonine modification. The segment covering 1382–1407 (RSQSQENMRSSPNPFITGLTRTNPFS) has biased composition (polar residues). 3 tandem repeats follow at residues 1396-1398 (FIT), 1406-1408 (FSD), and 1417-1419 (FRA). The segment at 1396 to 1419 (FITGLTRTNPFSDRTAAPGNPFRA) is 3 X 3 AA repeats of N-P-F. The span at 1536-1555 (RRPPPPPVPLLPPGTSPPVD) shows a compositional bias: pro residues. 2 positions are modified to phosphoserine: S1551 and S1565.

It belongs to the synaptojanin family. This sequence in the central section; belongs to the inositol 1,4,5-trisphosphate 5-phosphatase family. In terms of assembly, interacts with ASH/GRB2. Interacts with PACSIN1, PACSIN2 and PACSIN3. Interacts with AMPH, SH3GL1, SH3GL2 and SH3GL3. Interacts with MYO1E (via SH3 domain). Interacts with BIN1 and DNM1. Interacts with EPS15.

Its subcellular location is the cytoplasm. It localises to the perinuclear region. It carries out the reaction a 1,2-diacyl-sn-glycero-3-phospho-(1D-myo-inositol-4,5-bisphosphate) + H2O = a 1,2-diacyl-sn-glycero-3-phospho-(1D-myo-inositol 4-phosphate) + phosphate. In terms of biological role, phosphatase that acts on various phosphoinositides, including phosphatidylinositol 4-phosphate, phosphatidylinositol (4,5)-bisphosphate and phosphatidylinositol (3,4,5)-trisphosphate. Has a role in clathrin-mediated endocytosis. Hydrolyzes PIP2 bound to actin regulatory proteins resulting in the rearrangement of actin filaments downstream of tyrosine kinase and ASH/GRB2. This chain is Synaptojanin-1 (SYNJ1), found in Homo sapiens (Human).